A 646-amino-acid polypeptide reads, in one-letter code: Zinc finger protein 503 (646 aa).

Residues 1–11 are compositionally biased toward polar residues; that stretch reads MSTAPSLSALR. Residues 1 to 70 are disordered; the sequence is MSTAPSLSAL…PPSDPLRQAN (70 aa). Positions 16-28 are enriched in gly residues; the sequence is SGGGGGGGGGGGA. Low complexity predominate over residues 34 to 52; it reads SALSGNSSGPGPGSSPAGS. At serine 102 the chain carries Phosphoserine. Positions 121–332 are disordered; the sequence is SQIGKPDPSP…PSAPTSSSVL (212 aa). The segment covering 130–139 has biased composition (low complexity); it reads PSSKLSSVAS. Gly residues-rich tracts occupy residues 140 to 152 and 189 to 205; these read NGGGAGGAGGGAA and GGGGGGGGGGGGGGGGV. Lysine 209 is subject to N6-acetyllysine. Residues 217 to 226 show a composition bias toward polar residues; the sequence is ATCQPFTPRT. Over residues 227 to 240 the composition is skewed to low complexity; the sequence is GSPSSSASACSPGG. Residues serine 231 and serine 237 each carry the phosphoserine modification. Residues 250–259 are compositionally biased toward basic and acidic residues; the sequence is EGKDDKKDTD. Composition is skewed to gly residues over residues 260–277 and 300–315; these read VGGGGKGTGGASAEGGPT and GGPGGKALGSDCGGSS. Low complexity predominate over residues 316 to 330; sequence GSSSGSGPSAPTSSS. The C2H2-type zinc finger occupies 514-542; it reads HICNWVSANGPCDKRFATSEELLSHLRTH. At arginine 636 the chain carries Omega-N-methylarginine.

The protein belongs to the Elbow/Noc family.

The protein localises to the nucleus. May function as a transcriptional repressor. The polypeptide is Zinc finger protein 503 (ZNF503) (Homo sapiens (Human)).